The sequence spans 117 residues: Large ribosomal subunit protein uL18 (117 aa).

Belongs to the universal ribosomal protein uL18 family. Part of the 50S ribosomal subunit; part of the 5S rRNA/L5/L18/L25 subcomplex. Contacts the 5S and 23S rRNAs.

In terms of biological role, this is one of the proteins that bind and probably mediate the attachment of the 5S RNA into the large ribosomal subunit, where it forms part of the central protuberance. The chain is Large ribosomal subunit protein uL18 from Actinobacillus succinogenes (strain ATCC 55618 / DSM 22257 / CCUG 43843 / 130Z).